The following is an 802-amino-acid chain: Penicillin G acylase (802 aa).

Residues 1–26 (MKMKWLISVIILFVFIFPQNLVFAGE) form the signal peptide. Glutamate 177 contacts Ca(2+). Residues 235–265 (SAVIKASEKVGKERENFVQSSEELGLPLKIG) constitute a propeptide, spacer peptide. Catalysis depends on serine 266, which acts as the Nucleophile. Aspartate 341 contacts Ca(2+).

This sequence belongs to the peptidase S45 family. In terms of assembly, heterodimer of an alpha subunit and a beta subunit processed from the same precursor. The cofactor is Ca(2+).

It is found in the secreted. It carries out the reaction a penicillin + H2O = 6-aminopenicillanate + a carboxylate. In Rhizobium viscosum (Arthrobacter viscosus), this protein is Penicillin G acylase (pac).